We begin with the raw amino-acid sequence, 384 residues long: Tetraacyldisaccharide 4'-kinase (384 aa).

72–79 (TAGGTGKT) is an ATP binding site.

Belongs to the LpxK family.

It catalyses the reaction a lipid A disaccharide + ATP = a lipid IVA + ADP + H(+). Its pathway is glycolipid biosynthesis; lipid IV(A) biosynthesis; lipid IV(A) from (3R)-3-hydroxytetradecanoyl-[acyl-carrier-protein] and UDP-N-acetyl-alpha-D-glucosamine: step 6/6. Its function is as follows. Transfers the gamma-phosphate of ATP to the 4'-position of a tetraacyldisaccharide 1-phosphate intermediate (termed DS-1-P) to form tetraacyldisaccharide 1,4'-bis-phosphate (lipid IVA). This is Tetraacyldisaccharide 4'-kinase from Halothermothrix orenii (strain H 168 / OCM 544 / DSM 9562).